The chain runs to 157 residues: Protein Smg (157 aa).

It belongs to the Smg family.

This chain is Protein Smg, found in Pectobacterium atrosepticum (strain SCRI 1043 / ATCC BAA-672) (Erwinia carotovora subsp. atroseptica).